A 229-amino-acid polypeptide reads, in one-letter code: Peptidase E (229 aa).

Catalysis depends on charge relay system residues S120, D135, and H157.

It belongs to the peptidase S51 family.

It is found in the cytoplasm. It catalyses the reaction Dipeptidase E catalyzes the hydrolysis of dipeptides Asp-|-Xaa. It does not act on peptides with N-terminal Glu, Asn or Gln, nor does it cleave isoaspartyl peptides.. Functionally, hydrolyzes dipeptides containing N-terminal aspartate residues. May play a role in allowing the cell to use peptide aspartate to spare carbon otherwise required for the synthesis of the aspartate family of amino acids. The chain is Peptidase E from Salmonella newport (strain SL254).